The primary structure comprises 155 residues: Endoribonuclease YbeY (155 aa).

Zn(2+) contacts are provided by His110, His114, and His120.

It belongs to the endoribonuclease YbeY family. Zn(2+) is required as a cofactor.

Its subcellular location is the cytoplasm. Single strand-specific metallo-endoribonuclease involved in late-stage 70S ribosome quality control and in maturation of the 3' terminus of the 16S rRNA. The chain is Endoribonuclease YbeY from Deinococcus radiodurans (strain ATCC 13939 / DSM 20539 / JCM 16871 / CCUG 27074 / LMG 4051 / NBRC 15346 / NCIMB 9279 / VKM B-1422 / R1).